Reading from the N-terminus, the 333-residue chain is Sphingomyelinase C (333 aa).

The first 27 residues, 1–27, serve as a signal peptide directing secretion; the sequence is MKGKLLKGVLSFGIGLGVLYGGSSVQA. An intrachain disulfide couples cysteine 150 to cysteine 186.

This sequence belongs to the neutral sphingomyelinase family. The cofactor is Mg(2+).

It is found in the secreted. It carries out the reaction a sphingomyelin + H2O = phosphocholine + an N-acylsphing-4-enine + H(+). Activated by cobalt and manganese ions. Functionally, required, with sphingomyelinase, to effect target cell lysis (hemolysis). This is Sphingomyelinase C (sph) from Bacillus cereus.